Consider the following 274-residue polypeptide: Large ribosomal subunit protein uL2 (274 aa).

2 disordered regions span residues 28-53 (APYAPLLEKNSKSGGRNNNGRITVRH) and 223-274 (VAMN…RRNK). Over residues 39 to 48 (KSGGRNNNGR) the composition is skewed to low complexity.

The protein belongs to the universal ribosomal protein uL2 family. As to quaternary structure, part of the 50S ribosomal subunit. Forms a bridge to the 30S subunit in the 70S ribosome.

One of the primary rRNA binding proteins. Required for association of the 30S and 50S subunits to form the 70S ribosome, for tRNA binding and peptide bond formation. It has been suggested to have peptidyltransferase activity; this is somewhat controversial. Makes several contacts with the 16S rRNA in the 70S ribosome. This chain is Large ribosomal subunit protein uL2, found in Pseudoalteromonas atlantica (strain T6c / ATCC BAA-1087).